The following is a 395-amino-acid chain: HCLS1-binding protein 3 (395 aa).

Position 1 is an N-acetylmethionine (methionine 1). Serine 3 carries the post-translational modification Phosphoserine. One can recognise a PX domain in the interval 19-142 (GLDLSVPQHQ…EFLGTRAPGA (124 aa)). Disordered stretches follow at residues 143–310 (TGLA…KELF) and 322–374 (LGSE…AMDE). Residues 162–174 (DSDEAFDFFEQQD) show a composition bias toward acidic residues. The residue at position 191 (serine 191) is a Phosphoserine. Positions 194–206 (GEEEEEEEEEEVL) are enriched in acidic residues. Basic and acidic residues-rich tracts occupy residues 249–260 (SDKKVSETRRPL) and 299–310 (RPEHGDASKELF). Serine 254 carries the phosphoserine modification. Residues 329 to 339 (KPQTKPKPLVP) are compositionally biased toward pro residues. Lysine 341 bears the N6-acetyllysine mark.

In terms of assembly, binds HCLS1. Interacts with the SH3 domain of HCLS1 in vitro. In terms of tissue distribution, ubiquitously expressed.

May be a modulator of IL-2 signaling. The chain is HCLS1-binding protein 3 (Hs1bp3) from Mus musculus (Mouse).